Reading from the N-terminus, the 158-residue chain is NADH-quinone oxidoreductase subunit B (158 aa).

The [4Fe-4S] cluster site is built by cysteine 37, cysteine 38, cysteine 102, and cysteine 132.

The protein belongs to the complex I 20 kDa subunit family. As to quaternary structure, NDH-1 is composed of 14 different subunits. Subunits NuoB, C, D, E, F, and G constitute the peripheral sector of the complex. Requires [4Fe-4S] cluster as cofactor.

It localises to the cell inner membrane. The catalysed reaction is a quinone + NADH + 5 H(+)(in) = a quinol + NAD(+) + 4 H(+)(out). NDH-1 shuttles electrons from NADH, via FMN and iron-sulfur (Fe-S) centers, to quinones in the respiratory chain. Couples the redox reaction to proton translocation (for every two electrons transferred, four hydrogen ions are translocated across the cytoplasmic membrane), and thus conserves the redox energy in a proton gradient. This Legionella pneumophila (strain Paris) protein is NADH-quinone oxidoreductase subunit B.